Reading from the N-terminus, the 138-residue chain is 18 kDa antigen 2 (138 aa).

A sHSP domain is found at 21–131 (GTRRPAVMPM…KPRRIEINHN (111 aa)).

The protein belongs to the small heat shock protein (HSP20) family.

In terms of biological role, not known. This protein is one of the major immune reactive proteins in mycobacteria. This is 18 kDa antigen 2 from Mycobacterium avium.